A 263-amino-acid chain; its full sequence is Expansin-like A3 (263 aa).

A signal peptide spans 1 to 20; that stretch reads MRSFLYLIVVIFLFSSSVNA. The 107-residue stretch at 41-147 folds into the Expansin-like EG45 domain; it reads SGACAYGPMA…QRVPCNYGKR (107 aa). 2 N-linked (GlcNAc...) asparagine glycosylation sites follow: asparagine 99 and asparagine 102. One can recognise an Expansin-like CBD domain in the interval 161–243; sequence NYLAIKLLYQ…NWNSGRIYDA (83 aa).

This sequence belongs to the expansin family. Expansin-like A subfamily.

The protein localises to the secreted. The sequence is that of Expansin-like A3 (EXLA3) from Arabidopsis thaliana (Mouse-ear cress).